A 548-amino-acid chain; its full sequence is Chaperonin GroEL (548 aa).

Residues 30–33 (TLGP), Lys-51, 87–91 (DGTTT), Gly-415, 479–481 (NAA), and Asp-495 each bind ATP. The segment at 526 to 548 (REDKSSDVASSPAGGMGGMGGMM) is disordered. Over residues 539–548 (GGMGGMGGMM) the composition is skewed to gly residues.

Belongs to the chaperonin (HSP60) family. In terms of assembly, forms a cylinder of 14 subunits composed of two heptameric rings stacked back-to-back. Interacts with the co-chaperonin GroES.

It is found in the cytoplasm. It catalyses the reaction ATP + H2O + a folded polypeptide = ADP + phosphate + an unfolded polypeptide.. Functionally, together with its co-chaperonin GroES, plays an essential role in assisting protein folding. The GroEL-GroES system forms a nano-cage that allows encapsulation of the non-native substrate proteins and provides a physical environment optimized to promote and accelerate protein folding. The protein is Chaperonin GroEL of Buchnera aphidicola subsp. Schizaphis graminum (strain Sg).